The following is a 334-amino-acid chain: Replication factor C small subunit (334 aa).

Residue 49 to 56 (GPPGVGKT) participates in ATP binding.

The protein belongs to the activator 1 small subunits family. RfcS subfamily. As to quaternary structure, heteromultimer composed of small subunits (RfcS) and large subunits (RfcL).

Functionally, part of the RFC clamp loader complex which loads the PCNA sliding clamp onto DNA. The polypeptide is Replication factor C small subunit (Methanosarcina barkeri (strain Fusaro / DSM 804)).